The chain runs to 70 residues: ATP synthase subunit c (70 aa).

The next 2 membrane-spanning stretches (helical) occupy residues 3–23 (ALAA…IGIA) and 44–64 (LFLI…VIAF).

This sequence belongs to the ATPase C chain family. In terms of assembly, F-type ATPases have 2 components, F(1) - the catalytic core - and F(0) - the membrane proton channel. F(1) has five subunits: alpha(3), beta(3), gamma(1), delta(1), epsilon(1). F(0) has three main subunits: a(1), b(2) and c(10-14). The alpha and beta chains form an alternating ring which encloses part of the gamma chain. F(1) is attached to F(0) by a central stalk formed by the gamma and epsilon chains, while a peripheral stalk is formed by the delta and b chains.

The protein localises to the cell membrane. Functionally, f(1)F(0) ATP synthase produces ATP from ADP in the presence of a proton or sodium gradient. F-type ATPases consist of two structural domains, F(1) containing the extramembraneous catalytic core and F(0) containing the membrane proton channel, linked together by a central stalk and a peripheral stalk. During catalysis, ATP synthesis in the catalytic domain of F(1) is coupled via a rotary mechanism of the central stalk subunits to proton translocation. In terms of biological role, key component of the F(0) channel; it plays a direct role in translocation across the membrane. A homomeric c-ring of between 10-14 subunits forms the central stalk rotor element with the F(1) delta and epsilon subunits. This chain is ATP synthase subunit c, found in Caldicellulosiruptor bescii (strain ATCC BAA-1888 / DSM 6725 / KCTC 15123 / Z-1320) (Anaerocellum thermophilum).